Consider the following 613-residue polypeptide: Glucose-6-phosphate isomerase 1, chloroplastic (613 aa).

Low complexity predominate over residues 1–14; it reads MASLSGLYSSSPSL. Positions 1–21 are disordered; it reads MASLSGLYSSSPSLKPAKNHS. A chloroplast-targeting transit peptide spans 1-48; the sequence is MASLSGLYSSSPSLKPAKNHSFKALPAQSRDSFSFPHTSKPTNLPLTL. Glu392 acts as the Proton donor in catalysis. Residues His421 and Lys526 contribute to the active site. Ser595 is subject to Phosphoserine.

This sequence belongs to the GPI family.

It is found in the plastid. Its subcellular location is the chloroplast stroma. The enzyme catalyses alpha-D-glucose 6-phosphate = beta-D-fructose 6-phosphate. The protein operates within carbohydrate degradation; glycolysis; D-glyceraldehyde 3-phosphate and glycerone phosphate from D-glucose: step 2/4. It functions in the pathway carbohydrate biosynthesis; gluconeogenesis. Inhibited by glycerol-3-P (G3P). Its function is as follows. Promotes the synthesis of starch in leaves. This chain is Glucose-6-phosphate isomerase 1, chloroplastic (PGI1), found in Arabidopsis thaliana (Mouse-ear cress).